The following is a 492-amino-acid chain: N-succinylglutamate 5-semialdehyde dehydrogenase (492 aa).

Residue 220–225 participates in NAD(+) binding; it reads GSASTG. Residues glutamate 243 and cysteine 277 contribute to the active site.

This sequence belongs to the aldehyde dehydrogenase family. AstD subfamily.

It catalyses the reaction N-succinyl-L-glutamate 5-semialdehyde + NAD(+) + H2O = N-succinyl-L-glutamate + NADH + 2 H(+). Its pathway is amino-acid degradation; L-arginine degradation via AST pathway; L-glutamate and succinate from L-arginine: step 4/5. In terms of biological role, catalyzes the NAD-dependent reduction of succinylglutamate semialdehyde into succinylglutamate. This is N-succinylglutamate 5-semialdehyde dehydrogenase from Salmonella heidelberg (strain SL476).